The sequence spans 342 residues: tRNA N6-adenosine threonylcarbamoyltransferase (342 aa).

Fe cation contacts are provided by histidine 111 and histidine 115. Substrate contacts are provided by residues 134 to 138 (LVSGG), aspartate 167, glycine 180, and asparagine 275. Residue aspartate 303 coordinates Fe cation.

The protein belongs to the KAE1 / TsaD family. Fe(2+) serves as cofactor.

The protein resides in the cytoplasm. It carries out the reaction L-threonylcarbamoyladenylate + adenosine(37) in tRNA = N(6)-L-threonylcarbamoyladenosine(37) in tRNA + AMP + H(+). Functionally, required for the formation of a threonylcarbamoyl group on adenosine at position 37 (t(6)A37) in tRNAs that read codons beginning with adenine. Is involved in the transfer of the threonylcarbamoyl moiety of threonylcarbamoyl-AMP (TC-AMP) to the N6 group of A37, together with TsaE and TsaB. TsaD likely plays a direct catalytic role in this reaction. In Paraburkholderia xenovorans (strain LB400), this protein is tRNA N6-adenosine threonylcarbamoyltransferase.